The chain runs to 261 residues: Tyrosine phosphatase-like protein H5 (261 aa).

The 236-residue stretch at Leu26–Pro261 folds into the Tyrosine-protein phosphatase domain.

It belongs to the protein-tyrosine phosphatase family.

This chain is Tyrosine phosphatase-like protein H5 (H6), found in Microplitis demolitor bracovirus (isolate Webb) (MdBV).